A 478-amino-acid polypeptide reads, in one-letter code: uncharacterized protein (478 aa).

The ATP-grasp domain maps to 174-366 (RQVLAAAGVP…LIGEHIKLAI (193 aa)). Residue 214 to 219 (GSGSRG) participates in ATP binding. R339 is a catalytic residue.

This is an uncharacterized protein from Sinorhizobium fredii (strain NBRC 101917 / NGR234).